Here is a 653-residue protein sequence, read N- to C-terminus: Dual specificity protein kinase shkB (653 aa).

The tract at residues 112–133 (NPNNNNNNSNNTNSSDSNQNYS) is disordered. Residues 174–432 (YNREAKLGSG…FAEISKQRIL (259 aa)) form the Protein kinase domain. ATP is bound by residues 180–188 (LGSGAFGSV) and lysine 201. Aspartate 298 (proton acceptor) is an active-site residue. The SH2 domain occupies 534–625 (GFMAATSSKN…IKEPFEGGPF (92 aa)).

It belongs to the protein kinase superfamily. TKL Ser/Thr protein kinase family. SH2 domain-containing protein kinase subfamily.

It localises to the membrane. It catalyses the reaction L-seryl-[protein] + ATP = O-phospho-L-seryl-[protein] + ADP + H(+). The catalysed reaction is L-threonyl-[protein] + ATP = O-phospho-L-threonyl-[protein] + ADP + H(+). Its function is as follows. Required for proper chemotaxis and phagocytosis; proper spatiotemporal control of F-actin levels in chemotaxing cells. Negative regulator of the PI3K (phosphatidylinositol 3 kinase) pathway. Predominantly phosphorylates serines and threonines and tyrosines at a lower level. This Dictyostelium discoideum (Social amoeba) protein is Dual specificity protein kinase shkB (shkB).